The following is a 351-amino-acid chain: Blue-sensitive opsin (351 aa).

The Extracellular segment spans residues 1–40 (MKQVPEFHEDFYIPIPLDINNLSAYSPFLVPQDHLGNQGI). Asparagine 21 carries an N-linked (GlcNAc...) asparagine glycan. A helical membrane pass occupies residues 41-65 (FMAMSVFMFFIFIGGASINILTILC). The Cytoplasmic segment spans residues 66–77 (TIQFKKLRSHLN). Residues 78-103 (YILVNLSIANLFVAIFGSPLSFYSFF) form a helical membrane-spanning segment. Residues 104–117 (NRYFIFGATACKIE) lie on the Extracellular side of the membrane. Cysteine 114 and cysteine 191 form a disulfide bridge. The helical transmembrane segment at 118-137 (GFLATLGGMVGLWSLAVVAF) threads the bilayer. At 138 to 156 (ERWLVICKPLGNFTFKTPH) the chain is on the cytoplasmic side. A helical membrane pass occupies residues 157–180 (AIAGCILPWISALAASLPPLFGWS). The Extracellular portion of the chain corresponds to 181–206 (RYIPEGLQCSCGPDWYTTNNKYNNES). The helical transmembrane segment at 207–234 (YVMFLFCFCFAVPFGTIVFCYGQLLITL) threads the bilayer. The Cytoplasmic portion of the chain corresponds to 235–256 (KLAAKAQADSASTQKAEREVTK). A helical transmembrane segment spans residues 257–280 (MVVVMVLGFLVCWAPYASFSLWIV). The Extracellular segment spans residues 281–288 (SHRGEEFD). A helical membrane pass occupies residues 289 to 313 (LRMATIPSCLSKASTVYNPVIYVLM). Lysine 300 is subject to N6-(retinylidene)lysine. Residues 314–351 (NKQFRSCMMKMVCGKNIEEDEASTSSQVTQVSSVAPEK) lie on the Cytoplasmic side of the membrane.

It belongs to the G-protein coupled receptor 1 family. Opsin subfamily. Phosphorylated on some or all of the serine and threonine residues present in the C-terminal region. The color pigments are found in the cone photoreceptor cells.

The protein resides in the membrane. Functionally, visual pigments are the light-absorbing molecules that mediate vision. They consist of an apoprotein, opsin, covalently linked to cis-retinal. This chain is Blue-sensitive opsin, found in Carassius auratus (Goldfish).